The following is a 257-amino-acid chain: Snake venom serine protease KN2 (257 aa).

Residues 1-18 (MVLIRVLANLLILQLSYA) form the signal peptide. Positions 19–24 (QKSSEL) are excised as a propeptide. In terms of domain architecture, Peptidase S1 spans 25-248 (VIGGHPCNIN…HLDWIKSIIA (224 aa)). 6 cysteine pairs are disulfide-bonded: Cys31–Cys162, Cys49–Cys65, Cys97–Cys255, Cys141–Cys209, Cys173–Cys188, and Cys199–Cys224. Active-site charge relay system residues include His64 and Asp109. N-linked (GlcNAc...) asparagine glycosylation is found at Asn120 and Asn121. Ser203 functions as the Charge relay system in the catalytic mechanism.

It belongs to the peptidase S1 family. Snake venom subfamily. As to quaternary structure, monomer. In terms of tissue distribution, expressed by the venom gland.

The protein localises to the secreted. In terms of biological role, snake venom serine protease that may act in the hemostasis system of the prey. The chain is Snake venom serine protease KN2 from Trimeresurus stejnegeri (Chinese green tree viper).